Reading from the N-terminus, the 443-residue chain is FLYWCH-type zinc finger-containing protein peb-1 (443 aa).

The segment at 22-49 (KPGSSDISSSSTDTSAISPISVSSMPLS) is disordered. The segment covering 25-42 (SSDISSSSTDTSAISPIS) has biased composition (low complexity). The segment at residues 46-203 (MPLSPDKEKK…RNKDGKPKKP (158 aa)) is a DNA-binding region (required for DNA-binding). Residues 69–135 (IVTSFKGYQK…NACTKGSHNH (67 aa)) form an FLYWCH-type zinc finger. Residues 251 to 271 (PTIQIPQPIPTPIQHQQQEQS) are disordered.

It localises to the nucleus. Its function is as follows. Putative transcription factor. Binds to specific sequence motif 5'-[TC][AGT]TGCC[GA][AT]-3' in regulatory elements of target genes such as myosin myo-2. May modulate gene expression, perhaps acting in opposition to transcription factor pha-4. Involved in morphogenesis, perhaps especially in formation of the pharynx. Plays roles in molting, feeding and morphology. The chain is FLYWCH-type zinc finger-containing protein peb-1 from Caenorhabditis elegans.